The chain runs to 153 residues: Putative nuclear shuttle protein (153 aa).

It belongs to the nanoviridae nuclear shuttle protein family.

It is found in the host nucleus. It localises to the host cytoplasm. Putative nuclear shuttle protein. The sequence is that of Putative nuclear shuttle protein (DNA-N) from Cicer arietinum (Chickpea).